We begin with the raw amino-acid sequence, 291 residues long: 4-hydroxy-tetrahydrodipicolinate synthase (291 aa).

Thr44 provides a ligand contact to pyruvate. Tyr132 serves as the catalytic Proton donor/acceptor. Lys160 (schiff-base intermediate with substrate) is an active-site residue. Ile202 contacts pyruvate.

This sequence belongs to the DapA family. As to quaternary structure, homotetramer; dimer of dimers.

It is found in the cytoplasm. The enzyme catalyses L-aspartate 4-semialdehyde + pyruvate = (2S,4S)-4-hydroxy-2,3,4,5-tetrahydrodipicolinate + H2O + H(+). It participates in amino-acid biosynthesis; L-lysine biosynthesis via DAP pathway; (S)-tetrahydrodipicolinate from L-aspartate: step 3/4. Its function is as follows. Catalyzes the condensation of (S)-aspartate-beta-semialdehyde [(S)-ASA] and pyruvate to 4-hydroxy-tetrahydrodipicolinate (HTPA). This Syntrophobacter fumaroxidans (strain DSM 10017 / MPOB) protein is 4-hydroxy-tetrahydrodipicolinate synthase.